The primary structure comprises 515 residues: uncharacterized protein (515 aa).

3 disordered regions span residues Asp117–Gln188, Arg362–Met453, and Gly496–Asn515. 3 stretches are compositionally biased toward basic and acidic residues: residues Lys370–Glu380, Pro388–Glu402, and Pro428–Pro438. Residues Ala502–Asn515 are compositionally biased toward acidic residues.

This is an uncharacterized protein from Ostreid herpesvirus 1 (isolate France) (OsHV-1).